The primary structure comprises 463 residues: Interferon-inducible GTPase 5 (463 aa).

One can recognise an IRG-type G domain in the interval 53 to 235 (IRLEVGVTGE…PTLVSTWEHD (183 aa)). GTP is bound by residues 62 to 69 (ESGAGKSS), 87 to 91 (TGVME), 169 to 171 (KVD), and 216 to 218 (SNL). Ser-247 and Ser-304 each carry phosphoserine. A disordered region spans residues 404–437 (LEDDEPQPEVSLEVASDNGVEKGGSGEGGGEEAP).

The protein belongs to the TRAFAC class dynamin-like GTPase superfamily. IRG family. Abundantly expressed in semen (at protein level).

Its subcellular location is the cell projection. The protein localises to the cilium. It localises to the flagellum. It is found in the lipid droplet. It catalyses the reaction GTP + H2O = GDP + phosphate + H(+). Required for sperm motility and therefore male fertility, via positive regulation of spermatozoa fibrous sheath formation. This Homo sapiens (Human) protein is Interferon-inducible GTPase 5.